The sequence spans 359 residues: Peptide chain release factor 1 (359 aa).

The residue at position 235 (Gln-235) is an N5-methylglutamine. The interval 283–309 is disordered; that stretch reads QKAESERSQARRSQVGSGDRSERIRTY.

This sequence belongs to the prokaryotic/mitochondrial release factor family. Post-translationally, methylated by PrmC. Methylation increases the termination efficiency of RF1.

It is found in the cytoplasm. In terms of biological role, peptide chain release factor 1 directs the termination of translation in response to the peptide chain termination codons UAG and UAA. The polypeptide is Peptide chain release factor 1 (Brucella abortus (strain S19)).